We begin with the raw amino-acid sequence, 343 residues long: 3-isopropylmalate dehydrogenase (343 aa).

Positions 94, 104, 128, and 218 each coordinate substrate. Residues Asp-218, Asp-242, and Asp-246 each contribute to the Mg(2+) site. 278-290 is a binding site for NAD(+); sequence GSAPDIAGQNKAN.

Belongs to the isocitrate and isopropylmalate dehydrogenases family. LeuB type 2 subfamily. As to quaternary structure, homodimer. It depends on Mg(2+) as a cofactor. Mn(2+) serves as cofactor.

The protein resides in the cytoplasm. It catalyses the reaction (2R,3S)-3-isopropylmalate + NAD(+) = 4-methyl-2-oxopentanoate + CO2 + NADH. It functions in the pathway amino-acid biosynthesis; L-leucine biosynthesis; L-leucine from 3-methyl-2-oxobutanoate: step 3/4. In terms of biological role, catalyzes the oxidation of 3-carboxy-2-hydroxy-4-methylpentanoate (3-isopropylmalate) to 3-carboxy-4-methyl-2-oxopentanoate. The product decarboxylates to 4-methyl-2 oxopentanoate. The polypeptide is 3-isopropylmalate dehydrogenase (Bifidobacterium longum (strain DJO10A)).